Here is a 518-residue protein sequence, read N- to C-terminus: Glutamate--cysteine ligase (518 aa).

This sequence belongs to the glutamate--cysteine ligase type 1 family. Type 1 subfamily.

The catalysed reaction is L-cysteine + L-glutamate + ATP = gamma-L-glutamyl-L-cysteine + ADP + phosphate + H(+). Its pathway is sulfur metabolism; glutathione biosynthesis; glutathione from L-cysteine and L-glutamate: step 1/2. The polypeptide is Glutamate--cysteine ligase (Salmonella paratyphi C (strain RKS4594)).